A 232-amino-acid chain; its full sequence is tRNA1(Val) (adenine(37)-N6)-methyltransferase (232 aa).

Belongs to the methyltransferase superfamily. tRNA (adenine-N(6)-)-methyltransferase family.

Its subcellular location is the cytoplasm. The enzyme catalyses adenosine(37) in tRNA1(Val) + S-adenosyl-L-methionine = N(6)-methyladenosine(37) in tRNA1(Val) + S-adenosyl-L-homocysteine + H(+). Functionally, specifically methylates the adenine in position 37 of tRNA(1)(Val) (anticodon cmo5UAC). The polypeptide is tRNA1(Val) (adenine(37)-N6)-methyltransferase (Haemophilus influenzae (strain ATCC 51907 / DSM 11121 / KW20 / Rd)).